A 439-amino-acid chain; its full sequence is MRKLFFFLCTHVPKQRAKFTRIMESCQKKQKLETPTELSDMPDDLIFKIFSFLPFFKEDLATRFISEYGKGLWNPDPNAIFDDESLDMTCMSFVYGSLMSKDAQILDSLHLKLRKYYIASDINFLVQLGVNRSMRELRIDFFGKTLELPCCLSTCTTLKVLVLDHLNIMSVPGWFRLPSVETLQLSSVTGGSNYVPSLIRLCSVHERLVVDQNRNKDLVNINVPTLRSLSIDNKRRGHVPLGSFWINVPSLMFLNIKDTFQTIFESMPAMIKANIEVAHDQSQSVKFIESLTSTRHLCLCSPTSENPYPNGTKFSNLVHLKLCTCSAGWQNLLACMLNDAPNLRSLTLKLRQKSDVNPKKVWEKPTVVPECLSTRLEILKWRDYEGTEHEKDMVGYILANATFLQRATFSTKDRNQCDSRFSELQSMERVSEICEFVFD.

In terms of domain architecture, F-box spans 35-81 (PTELSDMPDDLIFKIFSFLPFFKEDLATRFISEYGKGLWNPDPNAIF). LRR repeat units lie at residues 155–177 (CTTL…WFRL) and 223–246 (VPTL…SFWI). One can recognise an FBD domain in the interval 361-411 (VWEKPTVVPECLSTRLEILKWRDYEGTEHEKDMVGYILANATFLQRATFST).

In Arabidopsis thaliana (Mouse-ear cress), this protein is F-box/FBD/LRR-repeat protein At5g56570.